Here is a 496-residue protein sequence, read N- to C-terminus: L-arabinose isomerase (496 aa).

4 residues coordinate Mn(2+): Glu302, Glu329, His346, and His445.

It belongs to the arabinose isomerase family. Mn(2+) serves as cofactor.

The enzyme catalyses beta-L-arabinopyranose = L-ribulose. It participates in carbohydrate degradation; L-arabinose degradation via L-ribulose; D-xylulose 5-phosphate from L-arabinose (bacterial route): step 1/3. Its function is as follows. Catalyzes the conversion of L-arabinose to L-ribulose. In Thermotoga neapolitana (strain ATCC 49049 / DSM 4359 / NBRC 107923 / NS-E), this protein is L-arabinose isomerase.